Consider the following 270-residue polypeptide: Formamidopyrimidine-DNA glycosylase (270 aa).

Pro-2 acts as the Schiff-base intermediate with DNA in catalysis. Glu-3 acts as the Proton donor in catalysis. The active-site Proton donor; for beta-elimination activity is the Lys-58. DNA is bound by residues His-91, Arg-110, and Arg-151. The FPG-type zinc finger occupies 236–270 (FVYGRGGMPCKLCGTTLREAKLGQRASVYCPRCQR). Arg-260 (proton donor; for delta-elimination activity) is an active-site residue.

This sequence belongs to the FPG family. In terms of assembly, monomer. The cofactor is Zn(2+).

The enzyme catalyses Hydrolysis of DNA containing ring-opened 7-methylguanine residues, releasing 2,6-diamino-4-hydroxy-5-(N-methyl)formamidopyrimidine.. The catalysed reaction is 2'-deoxyribonucleotide-(2'-deoxyribose 5'-phosphate)-2'-deoxyribonucleotide-DNA = a 3'-end 2'-deoxyribonucleotide-(2,3-dehydro-2,3-deoxyribose 5'-phosphate)-DNA + a 5'-end 5'-phospho-2'-deoxyribonucleoside-DNA + H(+). Involved in base excision repair of DNA damaged by oxidation or by mutagenic agents. Acts as a DNA glycosylase that recognizes and removes damaged bases. Has a preference for oxidized purines, such as 7,8-dihydro-8-oxoguanine (8-oxoG). Has AP (apurinic/apyrimidinic) lyase activity and introduces nicks in the DNA strand. Cleaves the DNA backbone by beta-delta elimination to generate a single-strand break at the site of the removed base with both 3'- and 5'-phosphates. This Pseudomonas putida (strain W619) protein is Formamidopyrimidine-DNA glycosylase.